Here is an 826-residue protein sequence, read N- to C-terminus: U4/U6 snRNA-associated-splicing factor PRP24 (826 aa).

RRM domains lie at 310 to 385 (TSVF…EAAG), 386 to 463 (ITLY…YSDP), 477 to 554 (REVH…LSVS), and 598 to 670 (RSFA…AVPQ).

It localises to the nucleus. Functionally, functions as a recycling factor of the spliceosome, a machinery that forms on each precursor-messenger RNA (pre-mRNA) and catalyzes the removal of introns. Chaperones the re-annealing of U4 and U6 snRNAs (small nuclear RNAs) released from previous rounds of splicing, an initial step in reforming the U4/U6-U5 tri-snRNP (small nuclear ribonucleoprotein) that can reassemble into another spliceosome complex; this step involves binding U6 and facilitating the unwinding of the U6 internal stem loop, followed by base-pairing of U6 to U4. The chain is U4/U6 snRNA-associated-splicing factor PRP24 from Ophiostoma ulmi (Dutch elm disease fungus).